The following is a 254-amino-acid chain: Pimeloyl-[acyl-carrier protein] methyl ester esterase (254 aa).

The region spanning 16–242 (LVLIHGWGMN…ASHAPFISHP (227 aa)) is the AB hydrolase-1 domain. Substrate is bound by residues W22, 82–83 (SL), and 143–147 (FLALQ). S82 serves as the catalytic Nucleophile. Residues D207 and H235 contribute to the active site. H235 serves as a coordination point for substrate.

Belongs to the AB hydrolase superfamily. Carboxylesterase BioH family. As to quaternary structure, monomer.

The protein localises to the cytoplasm. It carries out the reaction 6-carboxyhexanoyl-[ACP] methyl ester + H2O = 6-carboxyhexanoyl-[ACP] + methanol + H(+). The protein operates within cofactor biosynthesis; biotin biosynthesis. The physiological role of BioH is to remove the methyl group introduced by BioC when the pimeloyl moiety is complete. It allows to synthesize pimeloyl-ACP via the fatty acid synthetic pathway through the hydrolysis of the ester bonds of pimeloyl-ACP esters. This Photobacterium profundum (strain SS9) protein is Pimeloyl-[acyl-carrier protein] methyl ester esterase.